We begin with the raw amino-acid sequence, 224 residues long: Ribonuclease T (224 aa).

Residues 32–206 (VVVDVETGGF…YDTEKTAELF (175 aa)) form the Exonuclease domain. Mg(2+) contacts are provided by Asp35, Glu37, His193, and Asp198. The Proton donor/acceptor role is filled by His193.

Belongs to the RNase T family. Homodimer. It depends on Mg(2+) as a cofactor.

In terms of biological role, trims short 3' overhangs of a variety of RNA species, leaving a one or two nucleotide 3' overhang. Responsible for the end-turnover of tRNA: specifically removes the terminal AMP residue from uncharged tRNA (tRNA-C-C-A). Also appears to be involved in tRNA biosynthesis. This is Ribonuclease T from Pseudomonas paraeruginosa (strain DSM 24068 / PA7) (Pseudomonas aeruginosa (strain PA7)).